The primary structure comprises 406 residues: Tryptophan synthase beta chain (406 aa).

N6-(pyridoxal phosphate)lysine is present on Lys-99.

It belongs to the TrpB family. Tetramer of two alpha and two beta chains. Pyridoxal 5'-phosphate serves as cofactor.

The enzyme catalyses (1S,2R)-1-C-(indol-3-yl)glycerol 3-phosphate + L-serine = D-glyceraldehyde 3-phosphate + L-tryptophan + H2O. Its pathway is amino-acid biosynthesis; L-tryptophan biosynthesis; L-tryptophan from chorismate: step 5/5. The beta subunit is responsible for the synthesis of L-tryptophan from indole and L-serine. The sequence is that of Tryptophan synthase beta chain from Chelativorans sp. (strain BNC1).